The sequence spans 564 residues: Dihydroxy-acid dehydratase (564 aa).

Cysteine 51 is a [2Fe-2S] cluster binding site. Aspartate 83 is a Mg(2+) binding site. Cysteine 124 is a [2Fe-2S] cluster binding site. The Mg(2+) site is built by aspartate 125 and lysine 126. Residue lysine 126 is modified to N6-carboxylysine. Cysteine 196 contributes to the [2Fe-2S] cluster binding site. Glutamate 448 provides a ligand contact to Mg(2+). Serine 474 serves as the catalytic Proton acceptor.

Belongs to the IlvD/Edd family. In terms of assembly, homodimer. The cofactor is [2Fe-2S] cluster. It depends on Mg(2+) as a cofactor.

It catalyses the reaction (2R)-2,3-dihydroxy-3-methylbutanoate = 3-methyl-2-oxobutanoate + H2O. The enzyme catalyses (2R,3R)-2,3-dihydroxy-3-methylpentanoate = (S)-3-methyl-2-oxopentanoate + H2O. The protein operates within amino-acid biosynthesis; L-isoleucine biosynthesis; L-isoleucine from 2-oxobutanoate: step 3/4. It participates in amino-acid biosynthesis; L-valine biosynthesis; L-valine from pyruvate: step 3/4. Functions in the biosynthesis of branched-chain amino acids. Catalyzes the dehydration of (2R,3R)-2,3-dihydroxy-3-methylpentanoate (2,3-dihydroxy-3-methylvalerate) into 2-oxo-3-methylpentanoate (2-oxo-3-methylvalerate) and of (2R)-2,3-dihydroxy-3-methylbutanoate (2,3-dihydroxyisovalerate) into 2-oxo-3-methylbutanoate (2-oxoisovalerate), the penultimate precursor to L-isoleucine and L-valine, respectively. In Pyrobaculum calidifontis (strain DSM 21063 / JCM 11548 / VA1), this protein is Dihydroxy-acid dehydratase.